We begin with the raw amino-acid sequence, 171 residues long: Ribulose bisphosphate carboxylase small subunit, chloroplastic (171 aa).

A chloroplast-targeting transit peptide spans M1 to R50.

Belongs to the RuBisCO small chain family. In terms of assembly, heterohexadecamer of 8 large and 8 small subunits.

Its subcellular location is the plastid. It is found in the chloroplast. In terms of biological role, ruBisCO catalyzes two reactions: the carboxylation of D-ribulose 1,5-bisphosphate, the primary event in carbon dioxide fixation, as well as the oxidative fragmentation of the pentose substrate. Both reactions occur simultaneously and in competition at the same active site. Although the small subunit is not catalytic it is essential for maximal activity. This Pinus thunbergii (Japanese black pine) protein is Ribulose bisphosphate carboxylase small subunit, chloroplastic.